The primary structure comprises 68 residues: Elastase inhibitor AFLEI (68 aa).

Residues C5 and C67 are joined by a disulfide bond.

Its subcellular location is the secreted. Its function is as follows. Elastase inhibitor. Inhibitor of A.flavus elastase with a Ki of 40 nM. Inhibitor of A.fumigatus elastase and human leukocyte elastase. Inhibits the fibrinogenase and collagenase activities of A.flavus elastase. Does not inhibit porcine pancreatic elastase, trypsin, chymotrypsin, thrombin or A.acutus AC1-proteinase. The protein is Elastase inhibitor AFLEI of Aspergillus flavus.